The primary structure comprises 64 residues: Protein sigN173 (64 aa).

The chain is Protein sigN173 from Dictyostelium discoideum (Social amoeba).